The chain runs to 273 residues: 4-hydroxy-tetrahydrodipicolinate reductase (273 aa).

NAD(+) contacts are provided by residues 11 to 16 (GALGRM) and 106 to 108 (GTT). H162 functions as the Proton donor/acceptor in the catalytic mechanism. Residue H163 coordinates (S)-2,3,4,5-tetrahydrodipicolinate. The Proton donor role is filled by K166. Residue 172 to 173 (GT) coordinates (S)-2,3,4,5-tetrahydrodipicolinate.

This sequence belongs to the DapB family.

The protein localises to the cytoplasm. It catalyses the reaction (S)-2,3,4,5-tetrahydrodipicolinate + NAD(+) + H2O = (2S,4S)-4-hydroxy-2,3,4,5-tetrahydrodipicolinate + NADH + H(+). It carries out the reaction (S)-2,3,4,5-tetrahydrodipicolinate + NADP(+) + H2O = (2S,4S)-4-hydroxy-2,3,4,5-tetrahydrodipicolinate + NADPH + H(+). It functions in the pathway amino-acid biosynthesis; L-lysine biosynthesis via DAP pathway; (S)-tetrahydrodipicolinate from L-aspartate: step 4/4. Functionally, catalyzes the conversion of 4-hydroxy-tetrahydrodipicolinate (HTPA) to tetrahydrodipicolinate. The chain is 4-hydroxy-tetrahydrodipicolinate reductase from Synechococcus sp. (strain RCC307).